Reading from the N-terminus, the 154-residue chain is Small ribosomal subunit protein bS6 (154 aa).

Positions 97–154 are disordered; that stretch reads DSEPSAMMQKRDRDDRKDRERGRRRDDEGFGGGGGFGGDRGDRGDRGDRGERSFGGEG. 2 stretches are compositionally biased toward basic and acidic residues: residues 105 to 124 and 135 to 154; these read QKRDRDDRKDRERGRRRDDE and DRGDRGDRGDRGERSFGGEG.

It belongs to the bacterial ribosomal protein bS6 family.

Its function is as follows. Binds together with bS18 to 16S ribosomal RNA. The sequence is that of Small ribosomal subunit protein bS6 from Methylobacterium radiotolerans (strain ATCC 27329 / DSM 1819 / JCM 2831 / NBRC 15690 / NCIMB 10815 / 0-1).